A 477-amino-acid polypeptide reads, in one-letter code: UDP-N-acetylmuramate--L-alanine ligase (477 aa).

112–118 (GTHGKTT) provides a ligand contact to ATP.

Belongs to the MurCDEF family.

It localises to the cytoplasm. The enzyme catalyses UDP-N-acetyl-alpha-D-muramate + L-alanine + ATP = UDP-N-acetyl-alpha-D-muramoyl-L-alanine + ADP + phosphate + H(+). It participates in cell wall biogenesis; peptidoglycan biosynthesis. Cell wall formation. This is UDP-N-acetylmuramate--L-alanine ligase from Cupriavidus necator (strain ATCC 17699 / DSM 428 / KCTC 22496 / NCIMB 10442 / H16 / Stanier 337) (Ralstonia eutropha).